The following is an 848-amino-acid chain: Dolabradiene synthase KSL4, chloroplastic (848 aa).

The transit peptide at 1–64 (MASLSFASSH…SRMPRNVDTH (64 aa)) directs the protein to the chloroplast. The tract at residues 148-168 (QRSDGSWGPDGGSGDHPSSPL) is disordered. Residues D597, D601, N742, S746, and E750 each coordinate Mg(2+). A DDXXD motif motif is present at residues 597 to 601 (DDLFD).

It belongs to the terpene synthase family. The cofactor is Mg(2+).

The protein resides in the plastid. It is found in the chloroplast. The catalysed reaction is ent-copalyl diphosphate = dolabradiene + diphosphate. Its function is as follows. Involved in the production of antifungal dolabralexin phytoalexins in response to biotic and abiotic stresses. In response to fungal infection and in associtation with AN2, is involved in the production dolabradiene, a type of antifungal phytoalexin. Converts ent-copalyl disphosphate (ent-CPP) to dolabradiene. In Zea mays (Maize), this protein is Dolabradiene synthase KSL4, chloroplastic.